A 190-amino-acid chain; its full sequence is Adenine phosphoribosyltransferase (190 aa).

Belongs to the purine/pyrimidine phosphoribosyltransferase family. In terms of assembly, homodimer.

The protein resides in the cytoplasm. It catalyses the reaction AMP + diphosphate = 5-phospho-alpha-D-ribose 1-diphosphate + adenine. Its pathway is purine metabolism; AMP biosynthesis via salvage pathway; AMP from adenine: step 1/1. In terms of biological role, catalyzes a salvage reaction resulting in the formation of AMP, that is energically less costly than de novo synthesis. The polypeptide is Adenine phosphoribosyltransferase (Cupriavidus taiwanensis (strain DSM 17343 / BCRC 17206 / CCUG 44338 / CIP 107171 / LMG 19424 / R1) (Ralstonia taiwanensis (strain LMG 19424))).